Consider the following 469-residue polypeptide: Dihydroorotate dehydrogenase (quinone), mitochondrial (469 aa).

The N-terminal 37 residues, 1–37, are a transit peptide targeting the mitochondrion; that stretch reads MSSSAAALAWRRSLRDALLRGSAWRGAPAANSAAARL. The chain crosses the membrane as a helical span at residues 62–82; the sequence is LLTGAMIGLAIAGGAYVSTAD. Residues 150-154 and Ser174 contribute to the FMN site; that span reads AGFDK. A substrate-binding site is contributed by Lys154. 199 to 203 is a substrate binding site; it reads NRCGF. A disordered region spans residues 219–247; it reads HGKRKMEETSSSTSPTTSDVKQGGKAGPG. The span at 227 to 236 shows a compositional bias: low complexity; that stretch reads TSSSTSPTTS. FMN-binding residues include Asn252 and Asn283. 283-288 is a binding site for substrate; the sequence is NVSSPN. Ser286 serves as the catalytic Nucleophile. Residues Lys328 and Ser356 each coordinate FMN. 357–358 contributes to the substrate binding site; sequence NT. FMN contacts are provided by residues Gly380, Gly409, and 430-431; that span reads YT.

The protein belongs to the dihydroorotate dehydrogenase family. Type 2 subfamily. The cofactor is FMN.

It is found in the mitochondrion inner membrane. The catalysed reaction is (S)-dihydroorotate + a quinone = orotate + a quinol. It participates in pyrimidine metabolism; UMP biosynthesis via de novo pathway; orotate from (S)-dihydroorotate (quinone route): step 1/1. Functionally, catalyzes the conversion of dihydroorotate to orotate with quinone as electron acceptor. This chain is Dihydroorotate dehydrogenase (quinone), mitochondrial (PYRD), found in Oryza sativa subsp. japonica (Rice).